The following is a 502-amino-acid chain: Alpha-ketoglutarate-dependent dioxygenase FTO (502 aa).

Residues 32–324 (TPKDDEFYQQ…SSTHRVAECS (293 aa)) form a fe2OG dioxygenase domain region. 2 residues coordinate substrate: arginine 96 and tyrosine 108. Asparagine 202 provides a ligand contact to 2-oxoglutarate. A loop L1; predicted to block binding of double-stranded DNA or RNA region spans residues 210–221 (PYLKEEPYFGMG). At lysine 213 the chain carries N6-acetyllysine. Fe cation contacts are provided by histidine 228 and aspartate 230. A substrate-binding site is contributed by 228 to 231 (HHDE). Position 292 (tyrosine 292) interacts with 2-oxoglutarate. Histidine 304 lines the Fe cation pocket. 2-oxoglutarate contacts are provided by residues 313–315 (RFS), threonine 317, and arginine 319.

The protein belongs to the fto family. Monomer. May also exist as homodimer. Fe(2+) is required as a cofactor. Ubiquitous. Detected in brain, brain cortex, hypothalamus, cerebellum, liver, pancreas, heart, kidney, white adipose tissue and skeletal muscle. Most abundant in the brain, particularly in hypothalamic nuclei governing energy balance.

Its subcellular location is the nucleus. The protein resides in the nucleus speckle. The protein localises to the cytoplasm. It catalyses the reaction a 5'-end (N(7)-methyl 5'-triphosphoguanosine)-(N(6),2'-O-dimethyladenosine) in mRNA + 2-oxoglutarate + O2 = a 5'-end (N(7)-methyl 5'-triphosphoguanosine)-(2'-O-methyladenosine) in mRNA + formaldehyde + succinate + CO2. The enzyme catalyses an N(6)-methyladenosine in mRNA + 2-oxoglutarate + O2 = an adenosine in mRNA + formaldehyde + succinate + CO2. The catalysed reaction is N(6)-methyladenosine in U6 snRNA + 2-oxoglutarate + O2 = adenosine in U6 snRNA + formaldehyde + succinate + CO2. It carries out the reaction a 5'-end (N(7)-methyl 5'-triphosphoguanosine)-(N(6),2'-O-dimethyladenosine) in U6 snRNA + 2-oxoglutarate + O2 = a 5'-end (N(7)-methyl 5'-triphosphoguanosine)-(2'-O-methyladenosine) in U6 snRNA + formaldehyde + succinate + CO2. It catalyses the reaction an N(1)-methyladenosine in tRNA + 2-oxoglutarate + O2 = an adenosine in tRNA + formaldehyde + succinate + CO2. With respect to regulation, activated by ascorbate. Inhibited by N-oxalylglycine, fumarate and succinate. Its function is as follows. RNA demethylase that mediates oxidative demethylation of different RNA species, such as mRNAs, tRNAs and snRNAs, and acts as a regulator of fat mass, adipogenesis and energy homeostasis. Specifically demethylates N(6)-methyladenosine (m6A) RNA, the most prevalent internal modification of messenger RNA (mRNA) in higher eukaryotes. M6A demethylation by FTO affects mRNA expression and stability. Also able to demethylate m6A in U6 small nuclear RNA (snRNA). Mediates demethylation of N(6),2'-O-dimethyladenosine cap (m6A(m)), by demethylating the N(6)-methyladenosine at the second transcribed position of mRNAs and U6 snRNA. Demethylation of m6A(m) in the 5'-cap by FTO affects mRNA stability by promoting susceptibility to decapping. Also acts as a tRNA demethylase by removing N(1)-methyladenine from various tRNAs. Has no activity towards 1-methylguanine. Has no detectable activity towards double-stranded DNA. Also able to repair alkylated DNA and RNA by oxidative demethylation: demethylates single-stranded RNA containing 3-methyluracil, single-stranded DNA containing 3-methylthymine and has low demethylase activity towards single-stranded DNA containing 1-methyladenine or 3-methylcytosine. Ability to repair alkylated DNA and RNA is however unsure in vivo. Involved in the regulation of fat mass, adipogenesis and body weight, thereby contributing to the regulation of body size and body fat accumulation. Involved in the regulation of thermogenesis and the control of adipocyte differentiation into brown or white fat cells. Regulates activity of the dopaminergic midbrain circuitry via its ability to demethylate m6A in mRNAs. This Mus musculus (Mouse) protein is Alpha-ketoglutarate-dependent dioxygenase FTO.